The chain runs to 980 residues: Ovochymase-2 (980 aa).

Residues 1-21 (MAETSVFSIMMLTVMTAVGRG) form the signal peptide. A propeptide spans 22–49 (ATDRPGRVSRCGERPSANASVTYNLLSR) (activation peptide). A glycan (N-linked (GlcNAc...) asparagine) is linked at asparagine 39. The 250-residue stretch at 50 to 299 (IVGGTSAVKG…LLNWLSANLN (250 aa)) folds into the Peptidase S1 1 domain. Cysteine 75 and cysteine 91 form a disulfide bridge. Residue histidine 90 is the Charge relay system of the active site. Ca(2+)-binding residues include valine 112 and glutamate 117. Aspartate 140 (charge relay system) is an active-site residue. Cystine bridges form between cysteine 174–cysteine 244, cysteine 205–cysteine 223, cysteine 234–cysteine 263, cysteine 312–cysteine 342, cysteine 369–cysteine 388, cysteine 435–cysteine 462, cysteine 489–cysteine 510, cysteine 618–cysteine 634, cysteine 716–cysteine 779, cysteine 744–cysteine 757, and cysteine 769–cysteine 798. The Charge relay system role is filled by serine 238. 2 CUB domains span residues 312-425 (CSTN…YQAV) and 435-547 (CGSV…ISFV). The Peptidase S1 2 domain maps to 593–822 (IIKAEEAMPN…FIPWIMETIL (230 aa)). The propeptide at 593–980 (IIKAEEAMPN…WLSYSFHNQN (388 aa)) is activation peptide. N-linked (GlcNAc...) asparagine glycosylation occurs at asparagine 766. Residues 835–863 (HHPLIPPDKLSQEKALLPDSPPSNDSSSS) form a disordered region. Asparagine 858 and asparagine 932 each carry an N-linked (GlcNAc...) asparagine glycan.

It belongs to the peptidase S1 family. In terms of processing, the catalytically inactive 108 kDa form is processed both N- and C-terminally to give rise to catalytically active and inactive forms. In terms of tissue distribution, differentially expressed in the oviductal pars recta (PR) region.

The protein localises to the secreted. The enzyme catalyses Preferential cleavage at 371-Gly-Ser-Arg-|-Trp-374 of glycoprotein gp43 in Xenopus laevis coelemic egg envelope to yield gp41.. Functionally, mediates gamete interaction by affecting the vitelline coat. This is Ovochymase-2 (OVCH2) from Rhinella arenarum (Argentine common toad).